A 277-amino-acid chain; its full sequence is MARVEGQVALITGAARGQGRSHAIKLAEEGADVILVDVPNDVVDIGYPLGTADELDQTAKDVENLGRKAIVIHADVRDLESLTAEVDRAVSTLGRLDIVSANAGIASVPFLSHDIPDNTWRQMIDINLTGVWHTAKVAVPHILAGERGGSIVLTSSAAGLKGYAQISHYSAAKHGVVGLMRSLALELAPHRVRVNSLHPTQVNTPMIQNEGTYRIFSPDLENPTREDFEIASTTTNALPIPWVESVDVSNALLFLVSEDARYITGAAIPVDAGTTLK.

10–32 (LITGAARGQGRSHAIKLAEEGAD) contributes to the NAD(+) binding site. Ser-156 contributes to the substrate binding site. Tyr-169 functions as the Proton acceptor in the catalytic mechanism.

The protein belongs to the short-chain dehydrogenases/reductases (SDR) family. In terms of assembly, homotetramer.

It catalyses the reaction (1S,5R)-carveol + NAD(+) = (R)-carvone + NADH + H(+). It carries out the reaction (1S,5S)-carveol + NAD(+) = (S)-carvone + NADH + H(+). It participates in terpene metabolism; limonene degradation. With respect to regulation, competitively inhibited by the product (S)- or (R)-carvone. In terms of biological role, catalyzes the oxidation of carveol to carvone, with a strong stereoselectivity since it efficiently converts only the (6S)-stereoisomers, of which (-)-(4R,6S)-trans-carveol is the better substrate. Displays a broad substrate specificity with a preference for substituted cyclohexanols, and does not catalyze the oxidation of primary or short chain aliphatic secondary alcohols. Is also able, albeit more slowly, to oxidize limonene-1,2-diol into 1-hydroxy-2-oxolimonene. In Rhodococcus erythropolis (Arthrobacter picolinophilus), this protein is (-)-trans-carveol dehydrogenase (limC).